Here is a 199-residue protein sequence, read N- to C-terminus: Small ribosomal subunit protein uS4c (199 aa).

Positions 1 to 24 (MESDQSKVESDQSKMESDQSKVES) are enriched in basic and acidic residues. Residues 1–35 (MESDQSKVESDQSKMESDQSKVESDQSISQSTSKK) form a disordered region. One can recognise an S4 RNA-binding domain in the interval 84-146 (MRLDNIIFRL…QKSQELIKRN (63 aa)).

Belongs to the universal ribosomal protein uS4 family. As to quaternary structure, part of the 30S ribosomal subunit. Contacts protein S5. The interaction surface between S4 and S5 is involved in control of translational fidelity.

It is found in the plastid. The protein resides in the chloroplast. Its function is as follows. One of the primary rRNA binding proteins, it binds directly to 16S rRNA where it nucleates assembly of the body of the 30S subunit. With S5 and S12 plays an important role in translational accuracy. This Psilotum nudum (Whisk fern) protein is Small ribosomal subunit protein uS4c (rps4).